The primary structure comprises 190 residues: Putative manganese efflux pump MntP (190 aa).

Helical transmembrane passes span 37-57, 64-84, 111-131, 135-155, and 164-184; these read LILA…GWGI, LSFI…GVGA, LILG…MAFV, IITL…VGAW, and FGGW…GNIL.

The protein belongs to the MntP (TC 9.B.29) family.

It localises to the cell membrane. In terms of biological role, probably functions as a manganese efflux pump. The polypeptide is Putative manganese efflux pump MntP (Corynebacterium efficiens (strain DSM 44549 / YS-314 / AJ 12310 / JCM 11189 / NBRC 100395)).